We begin with the raw amino-acid sequence, 856 residues long: DNA mismatch repair protein MutS (856 aa).

Gly-617–Ser-624 lines the ATP pocket.

The protein belongs to the DNA mismatch repair MutS family.

Functionally, this protein is involved in the repair of mismatches in DNA. It is possible that it carries out the mismatch recognition step. This protein has a weak ATPase activity. The sequence is that of DNA mismatch repair protein MutS from Psychromonas ingrahamii (strain DSM 17664 / CCUG 51855 / 37).